Reading from the N-terminus, the 457-residue chain is B-cell linker protein (457 aa).

The segment at 38–306 is disordered; that stretch reads KLKVKGPPSV…FPPTQKPVLQ (269 aa). Residues 57-74 are compositionally biased toward acidic residues; it reads PADEEEQWSDDFDSDYEN. 5 positions are modified to phosphotyrosine; by SYK: Y72, Y84, Y96, Y178, and Y189. Residues 172–187 are compositionally biased toward acidic residues; it reads LEDEADYVVPVEDNDE. 2 stretches are compositionally biased toward polar residues: residues 206–218 and 256–270; these read VNRS…SSKH and PLKT…NASN. Residues 272–290 show a composition bias toward basic and acidic residues; sequence CEEKPVPAERHRGSSHRQD. Positions 347–454 constitute an SH2 domain; that stretch reads WYAGACDRKS…KDSTRLKYAV (108 aa).

In terms of assembly, associates with PLCG1, VAV1 and NCK1 in a B-cell antigen receptor-dependent fashion. Interacts with VAV3, PLCG2 and GRB2. Interacts through its SH2 domain with CD79A. Interacts (via SH2 domain) with SYK; phosphorylated and activated by SYK. Interacts (via SH2 domain) with SCIMP; this interaction is dependent on phosphorylation of SCIMP 'Tyr-120'. Post-translationally, following BCR activation, phosphorylated on tyrosine residues by SYK and LYN. When phosphorylated, serves as a scaffold to assemble downstream targets of antigen activation, including PLCG1, VAV1, GRB2 and NCK1. Phosphorylation of Tyr-84, Tyr-178 and Tyr-189 facilitates PLCG1 binding. Phosphorylation of Tyr-96 facilitates BTK binding. Phosphorylation of Tyr-72 facilitates VAV1 and NCK1 binding. Phosphorylation is required for both Ca(2+) and MAPK signaling pathways.

Its subcellular location is the cytoplasm. It localises to the cell membrane. Functionally, functions as a central linker protein, downstream of the B-cell receptor (BCR), bridging the SYK kinase to a multitude of signaling pathways and regulating biological outcomes of B-cell function and development. Plays a role in the activation of ERK/EPHB2, MAP kinase p38 and JNK. Modulates AP1 activation. Important for the activation of NF-kappa-B and NFAT. Plays an important role in BCR-mediated PLCG1 and PLCG2 activation and Ca(2+) mobilization and is required for trafficking of the BCR to late endosomes. However, does not seem to be required for pre-BCR-mediated activation of MAP kinase and phosphatidyl-inositol 3 (PI3) kinase signaling. May be required for the RAC1-JNK pathway. Plays a critical role in orchestrating the pro-B cell to pre-B cell transition. May play an important role in BCR-induced B-cell apoptosis. The protein is B-cell linker protein (Blnk) of Rattus norvegicus (Rat).